A 44-amino-acid polypeptide reads, in one-letter code: Photosystem I reaction center subunit IX (44 aa).

Residues tyrosine 7–isoleucine 27 traverse the membrane as a helical segment.

The protein belongs to the PsaJ family.

It is found in the plastid. The protein resides in the chloroplast thylakoid membrane. May help in the organization of the PsaE and PsaF subunits. This Dioscorea elephantipes (Elephant's foot yam) protein is Photosystem I reaction center subunit IX.